A 265-amino-acid polypeptide reads, in one-letter code: tRNA pseudouridine synthase A (265 aa).

Residue Asp52 is the Nucleophile of the active site. Residue Tyr112 participates in substrate binding.

This sequence belongs to the tRNA pseudouridine synthase TruA family. In terms of assembly, homodimer.

The enzyme catalyses uridine(38/39/40) in tRNA = pseudouridine(38/39/40) in tRNA. Functionally, formation of pseudouridine at positions 38, 39 and 40 in the anticodon stem and loop of transfer RNAs. The sequence is that of tRNA pseudouridine synthase A from Akkermansia muciniphila (strain ATCC BAA-835 / DSM 22959 / JCM 33894 / BCRC 81048 / CCUG 64013 / CIP 107961 / Muc).